The following is a 343-amino-acid chain: DNA-directed RNA polymerase subunit alpha (343 aa).

Positions 1-236 are alpha N-terminal domain (alpha-NTD); sequence MQEHYYKFWR…EQLQIFLTFD (236 aa). Positions 253 to 343 are alpha C-terminal domain (alpha-CTD); the sequence is LNENLFRSVD…QPPQKRETQQ (91 aa).

The protein belongs to the RNA polymerase alpha chain family. Homodimer. The RNAP catalytic core consists of 2 alpha, 1 beta, 1 beta' and 1 omega subunit. When a sigma factor is associated with the core the holoenzyme is formed, which can initiate transcription.

It catalyses the reaction RNA(n) + a ribonucleoside 5'-triphosphate = RNA(n+1) + diphosphate. DNA-dependent RNA polymerase catalyzes the transcription of DNA into RNA using the four ribonucleoside triphosphates as substrates. This Bdellovibrio bacteriovorus (strain ATCC 15356 / DSM 50701 / NCIMB 9529 / HD100) protein is DNA-directed RNA polymerase subunit alpha.